Here is a 316-residue protein sequence, read N- to C-terminus: Acetyl-coenzyme A carboxylase carboxyl transferase subunit alpha (316 aa).

The 254-residue stretch at 40–293 (LEKRSRDALR…GDLIAKTMKE (254 aa)) folds into the CoA carboxyltransferase C-terminal domain.

Belongs to the AccA family. As to quaternary structure, acetyl-CoA carboxylase is a heterohexamer composed of biotin carboxyl carrier protein (AccB), biotin carboxylase (AccC) and two subunits each of ACCase subunit alpha (AccA) and ACCase subunit beta (AccD).

Its subcellular location is the cytoplasm. The enzyme catalyses N(6)-carboxybiotinyl-L-lysyl-[protein] + acetyl-CoA = N(6)-biotinyl-L-lysyl-[protein] + malonyl-CoA. Its pathway is lipid metabolism; malonyl-CoA biosynthesis; malonyl-CoA from acetyl-CoA: step 1/1. Its function is as follows. Component of the acetyl coenzyme A carboxylase (ACC) complex. First, biotin carboxylase catalyzes the carboxylation of biotin on its carrier protein (BCCP) and then the CO(2) group is transferred by the carboxyltransferase to acetyl-CoA to form malonyl-CoA. The polypeptide is Acetyl-coenzyme A carboxylase carboxyl transferase subunit alpha (Mesorhizobium japonicum (strain LMG 29417 / CECT 9101 / MAFF 303099) (Mesorhizobium loti (strain MAFF 303099))).